The chain runs to 279 residues: Putative pyruvate, phosphate dikinase regulatory protein (279 aa).

153 to 160 (GVSRTSKT) is an ADP binding site.

This sequence belongs to the pyruvate, phosphate/water dikinase regulatory protein family. PDRP subfamily.

It catalyses the reaction N(tele)-phospho-L-histidyl/L-threonyl-[pyruvate, phosphate dikinase] + ADP = N(tele)-phospho-L-histidyl/O-phospho-L-threonyl-[pyruvate, phosphate dikinase] + AMP + H(+). The enzyme catalyses N(tele)-phospho-L-histidyl/O-phospho-L-threonyl-[pyruvate, phosphate dikinase] + phosphate + H(+) = N(tele)-phospho-L-histidyl/L-threonyl-[pyruvate, phosphate dikinase] + diphosphate. Bifunctional serine/threonine kinase and phosphorylase involved in the regulation of the pyruvate, phosphate dikinase (PPDK) by catalyzing its phosphorylation/dephosphorylation. The sequence is that of Putative pyruvate, phosphate dikinase regulatory protein from Bradyrhizobium diazoefficiens (strain JCM 10833 / BCRC 13528 / IAM 13628 / NBRC 14792 / USDA 110).